We begin with the raw amino-acid sequence, 185 residues long: Ribosome-recycling factor (185 aa).

Residues 128–158 (VRNTRQDANNKVKKLEKDKEISEDESKKAQE) are disordered.

It belongs to the RRF family.

It is found in the cytoplasm. In terms of biological role, responsible for the release of ribosomes from messenger RNA at the termination of protein biosynthesis. May increase the efficiency of translation by recycling ribosomes from one round of translation to another. This chain is Ribosome-recycling factor, found in Helicobacter pylori (strain J99 / ATCC 700824) (Campylobacter pylori J99).